A 351-amino-acid chain; its full sequence is Signal recognition particle receptor FtsY (351 aa).

GTP is bound by residues 152-159 (GVNGSGKT), 235-239 (DTAGR), and 299-302 (TKMD).

This sequence belongs to the GTP-binding SRP family. FtsY subfamily. Part of the signal recognition particle protein translocation system, which is composed of SRP and FtsY.

The protein localises to the cell membrane. The protein resides in the cytoplasm. The enzyme catalyses GTP + H2O = GDP + phosphate + H(+). Involved in targeting and insertion of nascent membrane proteins into the cytoplasmic membrane. Acts as a receptor for the complex formed by the signal recognition particle (SRP) and the ribosome-nascent chain (RNC). This Metamycoplasma hominis (strain ATCC 23114 / DSM 25592 / NBRC 14850 / NCTC 10111 / PG21) (Mycoplasma hominis) protein is Signal recognition particle receptor FtsY.